The chain runs to 188 residues: Meiotically up-regulated gene 94 protein (188 aa).

The protein resides in the cytoplasm. It is found in the nucleus. Functionally, has a role in meiosis. The protein is Meiotically up-regulated gene 94 protein (mug94) of Schizosaccharomyces pombe (strain 972 / ATCC 24843) (Fission yeast).